A 208-amino-acid polypeptide reads, in one-letter code: 3-demethoxyubiquinol 3-hydroxylase (208 aa).

6 residues coordinate Fe cation: E57, E87, H90, E139, E171, and H174.

This sequence belongs to the COQ7 family. Fe cation is required as a cofactor.

The protein localises to the cell membrane. It carries out the reaction a 5-methoxy-2-methyl-3-(all-trans-polyprenyl)benzene-1,4-diol + AH2 + O2 = a 3-demethylubiquinol + A + H2O. Its pathway is cofactor biosynthesis; ubiquinone biosynthesis. Catalyzes the hydroxylation of 2-nonaprenyl-3-methyl-6-methoxy-1,4-benzoquinol during ubiquinone biosynthesis. This Burkholderia cenocepacia (strain ATCC BAA-245 / DSM 16553 / LMG 16656 / NCTC 13227 / J2315 / CF5610) (Burkholderia cepacia (strain J2315)) protein is 3-demethoxyubiquinol 3-hydroxylase.